The primary structure comprises 307 residues: UDP-3-O-acyl-N-acetylglucosamine deacetylase (307 aa).

Zn(2+) is bound by residues His-78, His-241, and Asp-245. Residue His-268 is the Proton donor of the active site.

It belongs to the LpxC family. The cofactor is Zn(2+).

It carries out the reaction a UDP-3-O-[(3R)-3-hydroxyacyl]-N-acetyl-alpha-D-glucosamine + H2O = a UDP-3-O-[(3R)-3-hydroxyacyl]-alpha-D-glucosamine + acetate. It functions in the pathway glycolipid biosynthesis; lipid IV(A) biosynthesis; lipid IV(A) from (3R)-3-hydroxytetradecanoyl-[acyl-carrier-protein] and UDP-N-acetyl-alpha-D-glucosamine: step 2/6. In terms of biological role, catalyzes the hydrolysis of UDP-3-O-myristoyl-N-acetylglucosamine to form UDP-3-O-myristoylglucosamine and acetate, the committed step in lipid A biosynthesis. The chain is UDP-3-O-acyl-N-acetylglucosamine deacetylase from Verminephrobacter eiseniae (strain EF01-2).